Here is an 86-residue protein sequence, read N- to C-terminus: Large ribosomal subunit protein bL31 (86 aa).

The tract at residues 65 to 86 is disordered; it reads YGMGSADSATSKETKESKKSDK. Basic and acidic residues predominate over residues 74–86; the sequence is TSKETKESKKSDK.

The protein belongs to the bacterial ribosomal protein bL31 family. Type A subfamily. Part of the 50S ribosomal subunit.

In terms of biological role, binds the 23S rRNA. This is Large ribosomal subunit protein bL31 from Prochlorococcus marinus subsp. pastoris (strain CCMP1986 / NIES-2087 / MED4).